The primary structure comprises 260 residues: Carbonic anhydrase 2 (260 aa).

N-acetylserine is present on Ser2. Phosphoserine is present on Ser2. The region spanning 3–259 is the Alpha-carbonic anhydrase domain; sequence HHWGYGKHNG…LKNRQVRGFP (257 aa). The Proton donor/acceptor role is filled by His64. Residues His94, His96, and His119 each contribute to the Zn(2+) site. Phosphoserine occurs at positions 165 and 172. 198–199 lines the substrate pocket; the sequence is TT.

The protein belongs to the alpha-carbonic anhydrase family. As to quaternary structure, interacts with SLC4A4. Interaction with SLC4A7 regulates SLC4A7 transporter activity. Requires Zn(2+) as cofactor.

The protein resides in the cytoplasm. Its subcellular location is the cell membrane. The enzyme catalyses hydrogencarbonate + H(+) = CO2 + H2O. It carries out the reaction urea = cyanamide + H2O. Its activity is regulated as follows. Inhibited by acetazolamide. Catalyzes the reversible hydration of carbon dioxide. Can also hydrate cyanamide to urea. Involved in the regulation of fluid secretion into the anterior chamber of the eye. Essential for bone resorption and osteoclast differentiation. Contributes to intracellular pH regulation in the duodenal upper villous epithelium during proton-coupled peptide absorption. Stimulates the chloride-bicarbonate exchange activity of SLC26A6. The polypeptide is Carbonic anhydrase 2 (CA2) (Bos taurus (Bovine)).